The sequence spans 64 residues: Small ribosomal subunit protein bS21 (64 aa).

The tract at residues Glu39–Phe64 is disordered. A compositionally biased stretch (basic residues) spans Val43–Phe64.

The protein belongs to the bacterial ribosomal protein bS21 family.

This is Small ribosomal subunit protein bS21 (rpsU) from Myxococcus xanthus.